We begin with the raw amino-acid sequence, 329 residues long: Flotillin-like protein FloA (329 aa).

The next 2 membrane-spanning stretches (helical) occupy residues 4–24 and 26–46; these read IAFI…FAIV and VGLW…TLIG.

The protein belongs to the flotillin-like FloA family. Homooligomerizes.

Its subcellular location is the cell membrane. It is found in the membrane raft. Its function is as follows. Found in functional membrane microdomains (FMM) that may be equivalent to eukaryotic membrane rafts. FMMs are highly dynamic and increase in number as cells age. Flotillins are thought to be important factors in membrane fluidity. The chain is Flotillin-like protein FloA from Acetivibrio thermocellus (strain ATCC 27405 / DSM 1237 / JCM 9322 / NBRC 103400 / NCIMB 10682 / NRRL B-4536 / VPI 7372) (Clostridium thermocellum).